The chain runs to 120 residues: Large ribosomal subunit protein bL12 (120 aa).

This sequence belongs to the bacterial ribosomal protein bL12 family. Homodimer. Part of the ribosomal stalk of the 50S ribosomal subunit. Forms a multimeric L10(L12)X complex, where L10 forms an elongated spine to which 2 to 4 L12 dimers bind in a sequential fashion. Binds GTP-bound translation factors.

Forms part of the ribosomal stalk which helps the ribosome interact with GTP-bound translation factors. Is thus essential for accurate translation. This chain is Large ribosomal subunit protein bL12, found in Listeria welshimeri serovar 6b (strain ATCC 35897 / DSM 20650 / CCUG 15529 / CIP 8149 / NCTC 11857 / SLCC 5334 / V8).